Reading from the N-terminus, the 409-residue chain is MVAVRFYAVEMSLPCLCPCPSSPISLSLCSPRFNLLNTTSRRLGLSRNCRTLRISCSSSSTVTDQTQQSSFNDAELKLIDALIGIQGRGKSASPKQLNDVESAVKVLEGLEGIQNPTDSDLIEGRWRLMFTTRPGTASPIQRTFTGVDVFTVFQDVYLKATNDPRVSNIVKFSDFIGELKVEAVASIKDGKRVLFRFDRAAFDLKFLPFKVPYPVPFRLLGDEAKGWLDTTYLSPSGNLRISRGNKGTTFVLQKETVPRQKLLATISQDKGVAEAIDEFLASNSNSAEDNYELLEGSWQMIWSSQMYTDSWIENAANGLMGRQIIEKDGRIKFEVNIIPAFRFSMKGKFIKSESSTYDLKMDDAAIIGGAFGYPVDITNNIELKILYTDEKMRISRGFDNIIFVHIREI.

A chloroplast-targeting transit peptide spans 1-55 (MVAVRFYAVEMSLPCLCPCPSSPISLSLCSPRFNLLNTTSRRLGLSRNCRTLRIS).

Belongs to the PAP/fibrillin family.

The protein resides in the plastid. It is found in the chloroplast thylakoid. The polypeptide is Probable plastid-lipid-associated protein 12, chloroplastic (PAP12) (Arabidopsis thaliana (Mouse-ear cress)).